The sequence spans 125 residues: Holo-[acyl-carrier-protein] synthase (125 aa).

Mg(2+) is bound by residues D8 and E57.

Belongs to the P-Pant transferase superfamily. AcpS family. Mg(2+) is required as a cofactor.

Its subcellular location is the cytoplasm. It catalyses the reaction apo-[ACP] + CoA = holo-[ACP] + adenosine 3',5'-bisphosphate + H(+). Functionally, transfers the 4'-phosphopantetheine moiety from coenzyme A to a Ser of acyl-carrier-protein. The chain is Holo-[acyl-carrier-protein] synthase from Solibacter usitatus (strain Ellin6076).